We begin with the raw amino-acid sequence, 320 residues long: 1-aminocyclopropane-1-carboxylate oxidase (320 aa).

The 101-residue stretch at 156-256 folds into the Fe2OG dioxygenase domain; sequence PTFGTKVSNY…RMSIASFYNP (101 aa). H180, D182, and H237 together coordinate Fe cation.

The protein belongs to the iron/ascorbate-dependent oxidoreductase family. Requires Fe cation as cofactor.

The catalysed reaction is 1-aminocyclopropane-1-carboxylate + L-ascorbate + O2 = ethene + L-dehydroascorbate + hydrogen cyanide + CO2 + 2 H2O. Its pathway is alkene biosynthesis; ethylene biosynthesis via S-adenosyl-L-methionine; ethylene from S-adenosyl-L-methionine: step 2/2. The sequence is that of 1-aminocyclopropane-1-carboxylate oxidase (ACO) from Brassica juncea (Indian mustard).